The chain runs to 80 residues: Small ribosomal subunit protein bS16 (80 aa).

The protein belongs to the bacterial ribosomal protein bS16 family.

This chain is Small ribosomal subunit protein bS16, found in Acholeplasma laidlawii (strain PG-8A).